A 139-amino-acid chain; its full sequence is MKRTLSILKPDVISRNITGKVNAYIEAAGLQIIAMKQLHLTRIQAEAFYVVHKDRFFFNDLVNFMTSAPVIVQVLSGDDAVHRYRKLMGDTDPKKAAKGTIRGDFAESIDANCVHGSDSEENAKNEIAFFFSRCEIFDR.

ATP contacts are provided by Lys-9, Phe-57, Arg-85, Thr-91, Arg-102, and Asn-112. His-115 (pros-phosphohistidine intermediate) is an active-site residue.

Belongs to the NDK family. Homotetramer. Mg(2+) serves as cofactor.

The protein localises to the cytoplasm. It carries out the reaction a 2'-deoxyribonucleoside 5'-diphosphate + ATP = a 2'-deoxyribonucleoside 5'-triphosphate + ADP. It catalyses the reaction a ribonucleoside 5'-diphosphate + ATP = a ribonucleoside 5'-triphosphate + ADP. Its function is as follows. Major role in the synthesis of nucleoside triphosphates other than ATP. The ATP gamma phosphate is transferred to the NDP beta phosphate via a ping-pong mechanism, using a phosphorylated active-site intermediate. The polypeptide is Nucleoside diphosphate kinase (Neorickettsia sennetsu (strain ATCC VR-367 / Miyayama) (Ehrlichia sennetsu)).